Here is a 306-residue protein sequence, read N- to C-terminus: ATP synthase gamma chain (306 aa).

Belongs to the ATPase gamma chain family. In terms of assembly, F-type ATPases have 2 components, CF(1) - the catalytic core - and CF(0) - the membrane proton channel. CF(1) has five subunits: alpha(3), beta(3), gamma(1), delta(1), epsilon(1). CF(0) has three main subunits: a, b and c.

It is found in the cell membrane. Produces ATP from ADP in the presence of a proton gradient across the membrane. The gamma chain is believed to be important in regulating ATPase activity and the flow of protons through the CF(0) complex. The chain is ATP synthase gamma chain from Bifidobacterium animalis subsp. lactis (strain AD011).